The chain runs to 601 residues: Zinc finger protein 37 (601 aa).

In terms of domain architecture, KRAB spans 1-70; that stretch reads MATPEPAESD…VRANKNSSSS (70 aa). The residue at position 3 (threonine 3) is a Phosphothreonine. Phosphoserine is present on serine 9. The segment covering 30–43 has biased composition (polar residues); sequence ETCSNPASMGNQDP. The disordered stretch occupies residues 30-254; sequence ETCSNPASMG…SKSDKAPGSG (225 aa). Over residues 60–70 the composition is skewed to low complexity; the sequence is SVRANKNSSSS. A compositionally biased stretch (polar residues) spans 77 to 88; sequence TGTSAKVQQDGA. Composition is skewed to basic and acidic residues over residues 115 to 136, 164 to 174, and 183 to 238; these read KSSECTLLEKKNVHSKHDPSEK, KKPDTANEYRK, and VNRD…EKRK. The segment at 257 to 279 adopts a C2H2-type 1 zinc-finger fold; sequence YECNQCGKVLSHKQGLLDHQRTH. The C2H2-type 2; atypical zinc-finger motif lies at 285–303; it reads YECYECGIAFSQKSHLVVH. C2H2-type zinc fingers lie at residues 314–337, 343–365, 371–393, 399–421, 427–449, 455–477, 483–505, 511–533, 539–561, and 570–592; these read YECVQCGKAHGHKHALTDHLRISH, YKCNECGKTFRHSSNLMQHIRSH, YECKECGKSFRYNSSFTEHVRTH, YECNECGKAFKYGSSLTKHMRIH, FECTECGKTFSKKSHLVIHQRTH, YKCKECGKAFGHSSSLTYHMRTH, FECNKCGKAFKQIEGLTQHQRVH, YECVECGKAFSQKSHLIVHQRTH, FECYECGKAFNAKSQLVIHQRSH, and YECVECGKAFKQNASLTRHMKTH.

Belongs to the krueppel C2H2-type zinc-finger protein family. Expressed in testes, brain, kidney, spleen, thymus, lung, and at low levels in liver.

It localises to the nucleus. In terms of biological role, may be involved in transcriptional regulation. The protein is Zinc finger protein 37 (Zfp37) of Rattus norvegicus (Rat).